Reading from the N-terminus, the 62-residue chain is Kininogen-1 (62 aa).

The first 22 residues, 1–22, serve as a signal peptide directing secretion; it reads MDILKKSLFLVLFLGLVSFSIC. A disordered region spans residues 24 to 62; the sequence is EEKRDTEEEENDDEIEEESEEKKREAPERPPGFTPFRIY. Acidic residues predominate over residues 30–42; it reads EEEENDDEIEEES. The residue at position 54 (Pro54) is a 4-hydroxyproline; partial. Sulfotyrosine is present on Tyr62.

Belongs to the frog skin active peptide (FSAP) family. Bradykinin-related peptide subfamily. As to expression, expressed by the skin glands.

The protein localises to the secreted. Functionally, inhibits ACE with a Ki of 1.6 uM, and targets B2 bradykinin receptor (BDKRB2). Provokes contraction of smooth muscle preparation (ileum). In vivo, induces an early hyperalgesic effects in living rats after intraplantar injection. The polypeptide is Kininogen-1 (Phyllomedusa sauvagei (Sauvage's leaf frog)).